The chain runs to 358 residues: S-adenosylmethionine:tRNA ribosyltransferase-isomerase (358 aa).

Belongs to the QueA family. In terms of assembly, monomer.

The protein localises to the cytoplasm. It catalyses the reaction 7-aminomethyl-7-carbaguanosine(34) in tRNA + S-adenosyl-L-methionine = epoxyqueuosine(34) in tRNA + adenine + L-methionine + 2 H(+). It functions in the pathway tRNA modification; tRNA-queuosine biosynthesis. Functionally, transfers and isomerizes the ribose moiety from AdoMet to the 7-aminomethyl group of 7-deazaguanine (preQ1-tRNA) to give epoxyqueuosine (oQ-tRNA). This chain is S-adenosylmethionine:tRNA ribosyltransferase-isomerase, found in Desulfotalea psychrophila (strain LSv54 / DSM 12343).